The primary structure comprises 229 residues: Uracil-DNA glycosylase (229 aa).

Residue Asp-67 is the Proton acceptor of the active site.

Belongs to the uracil-DNA glycosylase (UDG) superfamily. UNG family.

It localises to the cytoplasm. It catalyses the reaction Hydrolyzes single-stranded DNA or mismatched double-stranded DNA and polynucleotides, releasing free uracil.. Functionally, excises uracil residues from the DNA which can arise as a result of misincorporation of dUMP residues by DNA polymerase or due to deamination of cytosine. The protein is Uracil-DNA glycosylase of Coxiella burnetii (strain RSA 493 / Nine Mile phase I).